The following is a 343-amino-acid chain: N-acetylornithine carbamoyltransferase (343 aa).

Residues 49–52, Trp-77, and Arg-112 contribute to the carbamoyl phosphate site; that span reads SMRT. Glu-144 contacts N(2)-acetyl-L-ornithine. A carbamoyl phosphate-binding site is contributed by 148-151; that stretch reads HPCQ. N(2)-acetyl-L-ornithine-binding residues include Lys-252 and Leu-295. A carbamoyl phosphate-binding site is contributed by 294–295; the sequence is CL. Residue Lys-302 is modified to N6-carboxylysine. Arg-322 is a binding site for carbamoyl phosphate.

This sequence belongs to the aspartate/ornithine carbamoyltransferase superfamily. AOTCase family. In terms of assembly, homotrimer.

The protein localises to the cytoplasm. The enzyme catalyses N(2)-acetyl-L-ornithine + carbamoyl phosphate = N(2)-acetyl-L-citrulline + phosphate + H(+). The protein operates within amino-acid biosynthesis; L-arginine biosynthesis. Its activity is regulated as follows. Carboxylation at Lys-302 increases the catalytic activity of the enzyme. In terms of biological role, catalyzes the transfer of the carbamoyl group from carbamoyl phosphate to the delta-amino group of N(2)-acetyl-L-ornithine to produce N(2)-acetyl-L-citrulline. This is a step in an alternative arginine biosynthesis pathway. The enzyme has no activity with ornithine. This Xanthomonas axonopodis pv. citri (strain 306) protein is N-acetylornithine carbamoyltransferase.